A 298-amino-acid polypeptide reads, in one-letter code: Probable endonuclease 4 (298 aa).

Zn(2+) contacts are provided by His-69, His-110, Glu-145, Asp-179, His-182, His-214, Asp-227, His-229, and Glu-259.

This sequence belongs to the AP endonuclease 2 family. Zn(2+) is required as a cofactor.

The enzyme catalyses Endonucleolytic cleavage to 5'-phosphooligonucleotide end-products.. Its function is as follows. Endonuclease IV plays a role in DNA repair. It cleaves phosphodiester bonds at apurinic or apyrimidinic (AP) sites, generating a 3'-hydroxyl group and a 5'-terminal sugar phosphate. This Geobacillus sp. (strain WCH70) protein is Probable endonuclease 4.